Consider the following 187-residue polypeptide: Nicotinamide-nucleotide adenylyltransferase (187 aa).

The protein belongs to the archaeal NMN adenylyltransferase family.

The protein resides in the cytoplasm. It carries out the reaction beta-nicotinamide D-ribonucleotide + ATP + H(+) = diphosphate + NAD(+). It functions in the pathway cofactor biosynthesis; NAD(+) biosynthesis; NAD(+) from nicotinamide D-ribonucleotide: step 1/1. The sequence is that of Nicotinamide-nucleotide adenylyltransferase from Thermococcus onnurineus (strain NA1).